A 58-amino-acid chain; its full sequence is Large ribosomal subunit protein uL30 (58 aa).

Belongs to the universal ribosomal protein uL30 family. Part of the 50S ribosomal subunit.

This chain is Large ribosomal subunit protein uL30, found in Pseudomonas fluorescens (strain ATCC BAA-477 / NRRL B-23932 / Pf-5).